Consider the following 719-residue polypeptide: Protein Hook homolog 3 (719 aa).

Residues 7 to 123 (VDLCESLLTW…RMLQLILGCA (117 aa)) enclose the Calponin-homology (CH) domain. 2 coiled-coil regions span residues 162–431 (SIGT…QAQE) and 459–665 (EIKE…IVSA). The tract at residues 679 to 719 (EDRLASTGSGQSFLARQRQATSSRRSYPGHVQPATASDVIA) is disordered. Over residues 693–704 (ARQRQATSSRRS) the composition is skewed to low complexity.

It belongs to the hook family. In terms of assembly, interacts with microtubules.

It localises to the cytoplasm. The protein resides in the cytoskeleton. The protein localises to the golgi apparatus. Acts as an adapter protein linking the dynein motor complex to various cargos and converts dynein from a non-processive to a highly processive motor in the presence of dynactin. Facilitates the interaction between dynein and dynactin and activates dynein processivity (the ability to move along a microtubule for a long distance without falling off the track). Predominantly recruits 2 dyneins, which increases both the force and speed of the microtubule motor. Component of the FTS/Hook/FHIP complex (FHF complex). The FHF complex may function to promote vesicle trafficking and/or fusion via the homotypic vesicular protein sorting complex (the HOPS complex). May regulate clearance of endocytosed receptors such as MSR1. Participates in defining the architecture and localization of the Golgi complex. FHF complex promotes the distribution of AP-4 complex to the perinuclear area of the cell. The polypeptide is Protein Hook homolog 3 (hook3) (Xenopus laevis (African clawed frog)).